Consider the following 196-residue polypeptide: SAGA-associated factor 11 homolog (196 aa).

Residues 1-22 (MSAANMPTTTGAQGSGNQVPTT) are disordered. Residues 106-127 (CTCPNCDRLVAAARFAPHLEKC) form an SGF11-type zinc finger. The disordered stretch occupies residues 144–196 (TKEGASSAHLHSAGNAGGTDDEDDVDWSSDKRRKKSNQNSRNNGSKKNNGKTF). A Phosphoserine modification is found at Ser172. Residues 180–196 (NQNSRNNGSKKNNGKTF) are compositionally biased toward low complexity.

It belongs to the SGF11 family. As to quaternary structure, component of some SAGA transcription coactivator-HAT complexes, at least composed of Ada2b, not/nonstop, Pcaf/Gcn5, Sgf11 and Spt3. Within the SAGA complex, Sgf11, e(y)2, and not/nonstop form an additional subcomplex of SAGA called the DUB module (deubiquitination module). Interacts directly with not/nonstop. Interacts with the AMEX complex component xmas-2. Interacts with Cbp80; important for promoter recruitment of Sgf11 that is not associated with the DUB module.

Its subcellular location is the nucleus. It is found in the nucleoplasm. The protein resides in the cytoplasm. Functionally, component of the transcription regulatory histone acetylation (HAT) complex SAGA, a multiprotein complex that activates transcription by remodeling chromatin and mediating histone acetylation and deubiquitination. Within the SAGA complex, participates in a subcomplex that specifically deubiquitinates histone H2B. The SAGA complex is recruited to specific gene promoters by activators, where it is required for transcription. Required for nuclear receptor-mediated transactivation. Binds independently on SAGA to promoters in an RNA-dependent manner. Binds to mRNA and is essential for total mRNA export from the nucleus. Required to counteract heterochromatin silencing. Controls the development of neuronal connectivity in visual system by being required for accurate axon targeting in the optic lobe. Required for expression of ecdysone-induced genes such as br/broad. The protein is SAGA-associated factor 11 homolog of Drosophila yakuba (Fruit fly).